The chain runs to 388 residues: MFKRVHLIVLDSVGIGEAPDAEKFGDVGSDTLGHIAKEAGLTIPHLEKLGLGTIAPLTGVKAVADHDGYATKLEEISVGKDTMTGHWEIMGLNIKKPFRVFPNGFPEELLKQIEDFSGRKVVCNKPYSGTAVIDDYGEHQMKTGDLIVYTSADPVLQIAAHEDIIPLEELYKICQYVRDITKDEPYMIGRIIARPYVGEPGNFTRTSNRHDYALDPFGHTVLDSLKENGNDVIAVGKINDIFNGQGITEAIRTKSNMDGVDQLLTVMNKEFTGLSFTNLVDFDALYGHRRDVKGYAKAIEDFDGRLPEIMAAMAEDDLLLITADHGNDPTFPGTDHTREYVPLLAYSKKMTKQGSLPQGFYSDISATIAENFEVPATENGQSFLNQLQ.

Residues D11, D283, H288, D324, H325, and H336 each coordinate Mn(2+).

It belongs to the phosphopentomutase family. Requires Mn(2+) as cofactor.

It is found in the cytoplasm. The enzyme catalyses 2-deoxy-alpha-D-ribose 1-phosphate = 2-deoxy-D-ribose 5-phosphate. It carries out the reaction alpha-D-ribose 1-phosphate = D-ribose 5-phosphate. Its pathway is carbohydrate degradation; 2-deoxy-D-ribose 1-phosphate degradation; D-glyceraldehyde 3-phosphate and acetaldehyde from 2-deoxy-alpha-D-ribose 1-phosphate: step 1/2. Its function is as follows. Isomerase that catalyzes the conversion of deoxy-ribose 1-phosphate (dRib-1-P) and ribose 1-phosphate (Rib-1-P) to deoxy-ribose 5-phosphate (dRib-5-P) and ribose 5-phosphate (Rib-5-P), respectively. This is Phosphopentomutase from Enterococcus faecalis (strain ATCC 700802 / V583).